A 261-amino-acid polypeptide reads, in one-letter code: Cytochrome c oxidase subunit 3 (261 aa).

The Mitochondrial matrix segment spans residues 1 to 15 (MTHQTHAYHMVNPSP). The helical transmembrane segment at 16-34 (WPLTGALSALLMTSGLAMW) threads the bilayer. The Mitochondrial intermembrane portion of the chain corresponds to 35–40 (FHFNST). The helical transmembrane segment at 41–66 (LLLAMGLLTNILTMYQWWRDIIREST) threads the bilayer. At 67 to 72 (FQGHHT) the chain is on the mitochondrial matrix side. A helical transmembrane segment spans residues 73-105 (SIVQKGLRYGMILFIISEVFFFSGFFWAFYHSS). Topologically, residues 106–128 (LAPTPELGGCWPPTGIHPLNPLE) are mitochondrial intermembrane. Residues 129–152 (VPLLNTSVLLASGVSITWAHHSLM) form a helical membrane-spanning segment. The Mitochondrial matrix segment spans residues 153-155 (EGN). A helical membrane pass occupies residues 156-183 (RKNMLQGLFITISLGVYFTLLQASEYYE). The Mitochondrial intermembrane segment spans residues 184-190 (ASFTISD). Residues 191–223 (GVYGSTFFVATGFHGLHVIIGSTFLIVCFLRQL) form a helical membrane-spanning segment. Residues 224-232 (KFHFTSSHH) lie on the Mitochondrial matrix side of the membrane. A helical membrane pass occupies residues 233 to 256 (FGFEAAAWYWHFVDVVWLFLYVSI). The Mitochondrial intermembrane portion of the chain corresponds to 257 to 261 (YWWGS).

It belongs to the cytochrome c oxidase subunit 3 family. In terms of assembly, component of the cytochrome c oxidase (complex IV, CIV), a multisubunit enzyme composed of 14 subunits. The complex is composed of a catalytic core of 3 subunits MT-CO1, MT-CO2 and MT-CO3, encoded in the mitochondrial DNA, and 11 supernumerary subunits COX4I, COX5A, COX5B, COX6A, COX6B, COX6C, COX7A, COX7B, COX7C, COX8 and NDUFA4, which are encoded in the nuclear genome. The complex exists as a monomer or a dimer and forms supercomplexes (SCs) in the inner mitochondrial membrane with NADH-ubiquinone oxidoreductase (complex I, CI) and ubiquinol-cytochrome c oxidoreductase (cytochrome b-c1 complex, complex III, CIII), resulting in different assemblies (supercomplex SCI(1)III(2)IV(1) and megacomplex MCI(2)III(2)IV(2)).

Its subcellular location is the mitochondrion inner membrane. The catalysed reaction is 4 Fe(II)-[cytochrome c] + O2 + 8 H(+)(in) = 4 Fe(III)-[cytochrome c] + 2 H2O + 4 H(+)(out). Component of the cytochrome c oxidase, the last enzyme in the mitochondrial electron transport chain which drives oxidative phosphorylation. The respiratory chain contains 3 multisubunit complexes succinate dehydrogenase (complex II, CII), ubiquinol-cytochrome c oxidoreductase (cytochrome b-c1 complex, complex III, CIII) and cytochrome c oxidase (complex IV, CIV), that cooperate to transfer electrons derived from NADH and succinate to molecular oxygen, creating an electrochemical gradient over the inner membrane that drives transmembrane transport and the ATP synthase. Cytochrome c oxidase is the component of the respiratory chain that catalyzes the reduction of oxygen to water. Electrons originating from reduced cytochrome c in the intermembrane space (IMS) are transferred via the dinuclear copper A center (CU(A)) of subunit 2 and heme A of subunit 1 to the active site in subunit 1, a binuclear center (BNC) formed by heme A3 and copper B (CU(B)). The BNC reduces molecular oxygen to 2 water molecules using 4 electrons from cytochrome c in the IMS and 4 protons from the mitochondrial matrix. The sequence is that of Cytochrome c oxidase subunit 3 (MT-CO3) from Equus caballus (Horse).